The following is a 341-amino-acid chain: Aspartate carbamoyltransferase catalytic subunit (341 aa).

2 residues coordinate carbamoyl phosphate: Arg-89 and Thr-90. An L-aspartate-binding site is contributed by Lys-117. Residues Arg-139, His-169, and Gln-172 each coordinate carbamoyl phosphate. L-aspartate is bound by residues Arg-202 and Arg-257. 2 residues coordinate carbamoyl phosphate: Gly-298 and Pro-299.

It belongs to the aspartate/ornithine carbamoyltransferase superfamily. ATCase family. As to quaternary structure, heterododecamer (2C3:3R2) of six catalytic PyrB chains organized as two trimers (C3), and six regulatory PyrI chains organized as three dimers (R2).

It carries out the reaction carbamoyl phosphate + L-aspartate = N-carbamoyl-L-aspartate + phosphate + H(+). It functions in the pathway pyrimidine metabolism; UMP biosynthesis via de novo pathway; (S)-dihydroorotate from bicarbonate: step 2/3. In terms of biological role, catalyzes the condensation of carbamoyl phosphate and aspartate to form carbamoyl aspartate and inorganic phosphate, the committed step in the de novo pyrimidine nucleotide biosynthesis pathway. The sequence is that of Aspartate carbamoyltransferase catalytic subunit from Paraburkholderia xenovorans (strain LB400).